Reading from the N-terminus, the 648-residue chain is MKTLSIDIETFSSVDLLKAGVYAYTEAPDFEILLFAYAFDDDPVKIIDLAQGDTLPHEVLVALTSSKVIKTAYNANFERTCIAKHFNLMLLPAQWRCTAVHATTLGLPGNLDGVAKALKLSAQKDKAGKALIRYFSVPCKPTKANGQRVRNLPEHDPEKWEKFKVYCIQDVEVERAIKNRISKFEPLESEHKLWALDQEINDRGVRIDVDLVKHAIACDEQYQAGLIAEAKKLTGLPNPNSTAQLKKWLEEKGLTISSLAKDKIEELIENTNDETVHRVLRLRQEMAKTSVKKYLAMEKALCPDNRVRGLLQFYGASRTGRWAGRLVQVQNLPQNKIEDLDTARNLLKGGHYEAIELLYGQVPFVLSQLVRTAFIPSEGNEFYVSDFSAIEARVIAWLAGEEWRLEVFNTHGKIYEASAAQMFKVPVESITKGSPLRQKGKVAELALGYQGGKGALIQMGALNMGLAEGELPELVKAWRTANKKIVKFWYDVEAAAIKAVKERKPVKLQHGLTFLYESGILFVQLPSGRRLAYAKPKLELDERFGKEALTYEGKLESGKWGRLNTYGGKLVENIVQATARDCLAITLMRLDNAGYKTVMHVHDEAVLDVPRGKNELDKVEAIMGEPISWAKGLPLTADGFVTDYYKKD.

It belongs to the DNA polymerase type-A family.

It catalyses the reaction DNA(n) + a 2'-deoxyribonucleoside 5'-triphosphate = DNA(n+1) + diphosphate. Its function is as follows. Replicates the viral genomic DNA. This polymerase possesses two enzymatic activities: DNA synthesis (polymerase) and an exonucleolytic activity that degrades single-stranded DNA in the 3'-5' direction. The polypeptide is DNA polymerase (L) (Bacillus subtilis (Bacteriophage SP02)).